A 261-amino-acid chain; its full sequence is Cytochrome c oxidase subunit 3 (261 aa).

Over 1–15 (MTHQTHAYHMVNPSP) the chain is Mitochondrial matrix. The chain crosses the membrane as a helical span at residues 16 to 34 (WPLTGALSALLMSSGLTMW). The Mitochondrial intermembrane segment spans residues 35–40 (FHFNSL). The chain crosses the membrane as a helical span at residues 41 to 66 (ILLTTGLVTNILTMYQWWRDVIREST). The Mitochondrial matrix portion of the chain corresponds to 67-72 (FQGHHT). The helical transmembrane segment at 73–105 (PVVQKGLRYGMVLFIISEVLFFTGFFWAFYHSS) threads the bilayer. At 106–128 (LAPTPELGGCWPPTGINPLNPLE) the chain is on the mitochondrial intermembrane side. A helical transmembrane segment spans residues 129 to 152 (VPLLNTSVLLASGVSITWAHHSLM). Residues 153–155 (EGN) are Mitochondrial matrix-facing. A helical membrane pass occupies residues 156 to 183 (RKQMLQALFITIALGVYFTLLQASEYHE). Topologically, residues 184 to 190 (ASFTISD) are mitochondrial intermembrane. A helical transmembrane segment spans residues 191–223 (GVYGSTFFVATGFHGLHVIIGSTFLIVCFLRQL). Topologically, residues 224–232 (KFHFTSDHH) are mitochondrial matrix. Residues 233-256 (FGFEAAAWYWHFVDVVWLFLYVSI) traverse the membrane as a helical segment. Residues 257–261 (YWWGS) lie on the Mitochondrial intermembrane side of the membrane.

This sequence belongs to the cytochrome c oxidase subunit 3 family. Component of the cytochrome c oxidase (complex IV, CIV), a multisubunit enzyme composed of 14 subunits. The complex is composed of a catalytic core of 3 subunits MT-CO1, MT-CO2 and MT-CO3, encoded in the mitochondrial DNA, and 11 supernumerary subunits COX4I, COX5A, COX5B, COX6A, COX6B, COX6C, COX7A, COX7B, COX7C, COX8 and NDUFA4, which are encoded in the nuclear genome. The complex exists as a monomer or a dimer and forms supercomplexes (SCs) in the inner mitochondrial membrane with NADH-ubiquinone oxidoreductase (complex I, CI) and ubiquinol-cytochrome c oxidoreductase (cytochrome b-c1 complex, complex III, CIII), resulting in different assemblies (supercomplex SCI(1)III(2)IV(1) and megacomplex MCI(2)III(2)IV(2)).

The protein resides in the mitochondrion inner membrane. The catalysed reaction is 4 Fe(II)-[cytochrome c] + O2 + 8 H(+)(in) = 4 Fe(III)-[cytochrome c] + 2 H2O + 4 H(+)(out). Functionally, component of the cytochrome c oxidase, the last enzyme in the mitochondrial electron transport chain which drives oxidative phosphorylation. The respiratory chain contains 3 multisubunit complexes succinate dehydrogenase (complex II, CII), ubiquinol-cytochrome c oxidoreductase (cytochrome b-c1 complex, complex III, CIII) and cytochrome c oxidase (complex IV, CIV), that cooperate to transfer electrons derived from NADH and succinate to molecular oxygen, creating an electrochemical gradient over the inner membrane that drives transmembrane transport and the ATP synthase. Cytochrome c oxidase is the component of the respiratory chain that catalyzes the reduction of oxygen to water. Electrons originating from reduced cytochrome c in the intermembrane space (IMS) are transferred via the dinuclear copper A center (CU(A)) of subunit 2 and heme A of subunit 1 to the active site in subunit 1, a binuclear center (BNC) formed by heme A3 and copper B (CU(B)). The BNC reduces molecular oxygen to 2 water molecules using 4 electrons from cytochrome c in the IMS and 4 protons from the mitochondrial matrix. This Hippopotamus amphibius (Hippopotamus) protein is Cytochrome c oxidase subunit 3 (MT-CO3).